Consider the following 285-residue polypeptide: UPF0354 protein SACOL1793 (285 aa).

This sequence belongs to the UPF0354 family.

This chain is UPF0354 protein SACOL1793, found in Staphylococcus aureus (strain COL).